The following is a 326-amino-acid chain: Macrosialin (326 aa).

The signal sequence occupies residues 1–20; sequence MRLPVCLILLGPLIAQGTEE. Residues 21 to 109 are mucin-like; the sequence is DCPHKKAVTL…ATSPRSSTVG (89 aa). Over 21 to 291 the chain is Extracellular; sequence DCPHKKAVTL…PCFSCNRDQS (271 aa). The span at 38-58 shows a compositional bias: low complexity; sequence PTATESTASPTTSHRPTTTSH. Residues 38–129 form a disordered region; it reads PTATESTASP…SPRSKGALGN (92 aa). Tandem repeats lie at residues 44-49, 50-64, 65-72, and 73-88. Residues 59 to 69 are compositionally biased toward polar residues; that stretch reads GNVTVHTSSGP. Asn60 carries an N-linked (GlcNAc...) asparagine glycan. Residues 70 to 80 show a composition bias toward low complexity; the sequence is TTVTHNPATTT. Over residues 81–108 the composition is skewed to polar residues; sequence SHGNATISHATVSPTTNGTATSPRSSTV. Residues Asn84 and Asn97 are each glycosylated (N-linked (GlcNAc...) asparagine). A compositionally biased stretch (pro residues) spans 111-120; that stretch reads HPGPPPPSPS. 6 N-linked (GlcNAc...) asparagine glycosylation sites follow: Asn129, Asn134, Asn169, Asn218, Asn233, and Asn251. A disulfide bond links Cys139 and Cys177. Cys249 and Cys286 are disulfide-bonded. A helical membrane pass occupies residues 292–316; the sequence is LLLPLIIGLVLLGLLTLVLIAFCIT. Residues 317–326 are Cytoplasmic-facing; that stretch reads RRRQSTYQPL.

The protein belongs to the LAMP family. Post-translationally, N- and O-glycosylated. In terms of tissue distribution, expressed in tissue macrophages and to a lesser extent in dendritic cells.

It localises to the endosome membrane. Its subcellular location is the lysosome membrane. The protein resides in the cell membrane. Functionally, could play a role in phagocytic activities of tissue macrophages, both in intracellular lysosomal metabolism and extracellular cell-cell and cell-pathogen interactions. Binds to tissue- and organ-specific lectins or selectins, allowing homing of macrophage subsets to particular sites. Rapid recirculation of CD68 from endosomes and lysosomes to the plasma membrane may allow macrophages to crawl over selectin-bearing substrates or other cells. This chain is Macrosialin (Cd68), found in Mus musculus (Mouse).